The sequence spans 173 residues: NADH-ubiquinone oxidoreductase chain 6 (173 aa).

Helical transmembrane passes span 1–21 (MTYF…AVAS), 27–47 (YGVV…LSLG), 48–68 (VSFV…VVFV), 87–107 (VVGY…VGGF), and 139–159 (CGVG…FVVL).

This sequence belongs to the complex I subunit 6 family.

Its subcellular location is the mitochondrion membrane. It carries out the reaction a ubiquinone + NADH + 5 H(+)(in) = a ubiquinol + NAD(+) + 4 H(+)(out). Its function is as follows. Core subunit of the mitochondrial membrane respiratory chain NADH dehydrogenase (Complex I) that is believed to belong to the minimal assembly required for catalysis. Complex I functions in the transfer of electrons from NADH to the respiratory chain. The immediate electron acceptor for the enzyme is believed to be ubiquinone. The sequence is that of NADH-ubiquinone oxidoreductase chain 6 (MT-ND6) from Aethia pusilla (Least auklet).